The following is a 371-amino-acid chain: Cytokine receptor-like factor 2 (371 aa).

The N-terminal stretch at 1 to 22 (MGRLVLLWGAAVFLLGGWMALG) is a signal peptide. Over 23 to 231 (QGGAAEGVQI…PTPPKPKLSK (209 aa)) the chain is Extracellular. Asn-47 and Asn-55 each carry an N-linked (GlcNAc...) asparagine glycan. Cys-71 and Cys-84 are joined by a disulfide. N-linked (GlcNAc...) asparagine glycans are attached at residues Asn-101 and Asn-169. The 94-residue stretch at 118 to 211 (KPSSPKHVRF…DWSEVTCWQR (94 aa)) folds into the Fibronectin type-III domain. A disulfide bond links Cys-180 and Cys-218. The WSXWS motif signature appears at 200-204 (PSDWS). The chain crosses the membrane as a helical span at residues 232 to 252 (FILISSLAILLMVSLLLLSLW). Topologically, residues 253 to 371 (KLWRVKKFLI…VMNDRSYVAL (119 aa)) are cytoplasmic. The short motif at 261-269 (LIPSVPDPK) is the Box 1 motif element. A compositionally biased stretch (basic and acidic residues) spans 322 to 336 (ESPRMLDPQTEEKEA). Residues 322–347 (ESPRMLDPQTEEKEASGGSLQLPHQP) are disordered.

Belongs to the type I cytokine receptor family. Type 5 subfamily. As to quaternary structure, heterodimer of CRLF2 and IL7R. As to expression, expressed in heart, skeletal muscle, kidney and adult and fetal liver. Primarily expressed in dendrites and monocytes. Weakly expressed in T-cells.

The protein resides in the cell membrane. The protein localises to the secreted. Functionally, receptor for thymic stromal lymphopoietin (TSLP). Forms a functional complex with TSLP and IL7R which is capable of stimulating cell proliferation through activation of STAT3 and STAT5. Also activates JAK2. Implicated in the development of the hematopoietic system. This chain is Cytokine receptor-like factor 2 (CRLF2), found in Homo sapiens (Human).